The sequence spans 1161 residues: Integrin alpha-D (1161 aa).

Positions 1–17 are cleaved as a signal peptide; sequence MTFGTVLLLSVLASYHG. Topologically, residues 18-1099 are extracellular; that stretch reads FNLDVEEPTI…MVLEEDEVYN (1082 aa). 2 FG-GAP repeats span residues 19-76 and 77-136; these read NLDV…MCQP and IPLH…IIQT. N-linked (GlcNAc...) asparagine glycosylation is present at N59. An intrachain disulfide couples C67 to C74. Residues N87 and N99 are each glycosylated (N-linked (GlcNAc...) asparagine). An intrachain disulfide couples C106 to C124. The 183-residue stretch at 150-332 folds into the VWFA domain; that stretch reads DIVFLIDGSG…SIQKQLQEKI (183 aa). FG-GAP repeat units follow at residues 339–390, 391–442, 443–503, 506–564, and 569–629; these read QSRA…PTFI, NMSQ…SRQW, RKKA…RVQW, DAVL…SGIS, and QRIA…FSPV. N-linked (GlcNAc...) asparagine glycosylation occurs at N391. Residues D465, D467, D469, D473, D529, N531, D533, D537, D592, D596, and D600 each contribute to the Ca(2+) site. The cysteines at positions 654 and 709 are disulfide-linked. N-linked (GlcNAc...) asparagine glycans are attached at residues N690 and N732. Disulfide bonds link C768/C774 and C845/C860. N872 and N956 each carry an N-linked (GlcNAc...) asparagine glycan. Intrachain disulfides connect C993/C1017 and C1022/C1027. A glycan (N-linked (GlcNAc...) asparagine) is linked at N1045. Residues 1100–1120 form a helical membrane-spanning segment; the sequence is AIPIIMGSSVGALLLLALITA. At 1121–1161 the chain is on the cytoplasmic side; it reads TLYKLGFFKRHYKEMLEDKPEDTATFSGDDFSCVAPNVPLS. The GFFKR motif motif lies at 1126–1130; sequence GFFKR.

This sequence belongs to the integrin alpha chain family. Heterodimer of an alpha and a beta subunit. Alpha-D associates with beta-2. As to expression, expressed moderately on myelomonocytic cell lines and subsets of peripheral blood leukocytes and strongly on tissue-specialized cells, including macrophages foam cells within atherosclerotic plaques, and on splenic red pulp macrophages.

It localises to the membrane. Integrin alpha-D/beta-2 is a receptor for ICAM3 and VCAM1. May play a role in the atherosclerotic process such as clearing lipoproteins from plaques and in phagocytosis of blood-borne pathogens, particulate matter, and senescent erythrocytes from the blood. This Homo sapiens (Human) protein is Integrin alpha-D (ITGAD).